Consider the following 490-residue polypeptide: Probable cytosol aminopeptidase (490 aa).

Residues Lys-257 and Asp-262 each contribute to the Mn(2+) site. Residue Lys-269 is part of the active site. Residues Asp-281, Asp-341, and Glu-343 each contribute to the Mn(2+) site. Arg-345 is a catalytic residue.

This sequence belongs to the peptidase M17 family. The cofactor is Mn(2+).

Its subcellular location is the cytoplasm. The catalysed reaction is Release of an N-terminal amino acid, Xaa-|-Yaa-, in which Xaa is preferably Leu, but may be other amino acids including Pro although not Arg or Lys, and Yaa may be Pro. Amino acid amides and methyl esters are also readily hydrolyzed, but rates on arylamides are exceedingly low.. It carries out the reaction Release of an N-terminal amino acid, preferentially leucine, but not glutamic or aspartic acids.. In terms of biological role, presumably involved in the processing and regular turnover of intracellular proteins. Catalyzes the removal of unsubstituted N-terminal amino acids from various peptides. This Prochlorococcus marinus (strain MIT 9215) protein is Probable cytosol aminopeptidase.